A 254-amino-acid chain; its full sequence is CDP-diacylglycerol pyrophosphatase (254 aa).

A helical transmembrane segment spans residues 6-26 (YFLLALLVAILAALAGGYYWL).

This sequence belongs to the Cdh family.

Its subcellular location is the cell inner membrane. It catalyses the reaction a CDP-1,2-diacyl-sn-glycerol + H2O = a 1,2-diacyl-sn-glycero-3-phosphate + CMP + 2 H(+). Its pathway is phospholipid metabolism; CDP-diacylglycerol degradation; phosphatidate from CDP-diacylglycerol: step 1/1. The sequence is that of CDP-diacylglycerol pyrophosphatase from Klebsiella pneumoniae (strain 342).